A 739-amino-acid polypeptide reads, in one-letter code: Catalase-peroxidase 2 (739 aa).

The first 26 residues, 1–26 (MKKSTIPSMSALTLAMSLAFGGAAIA), serve as a signal peptide directing secretion. Positions 105 to 227 (WHSAGVYRIF…MGATQMGLIY (123 aa)) form a cross-link, tryptophyl-tyrosyl-methioninium (Trp-Tyr) (with M-253). The active-site Proton acceptor is histidine 106. A cross-link (tryptophyl-tyrosyl-methioninium (Tyr-Met) (with W-105)) is located at residues 227 to 253 (YVNPEGPNGVPDPLASAKEIRDTFGRM). Histidine 268 contacts heme b.

The protein belongs to the peroxidase family. Peroxidase/catalase subfamily. Homodimer or homotetramer. Requires heme b as cofactor. In terms of processing, formation of the three residue Trp-Tyr-Met cross-link is important for the catalase, but not the peroxidase activity of the enzyme.

The enzyme catalyses H2O2 + AH2 = A + 2 H2O. It carries out the reaction 2 H2O2 = O2 + 2 H2O. In terms of biological role, bifunctional enzyme with both catalase and broad-spectrum peroxidase activity. This Shewanella sp. (strain ANA-3) protein is Catalase-peroxidase 2.